A 38-amino-acid chain; its full sequence is Toxin CSTX-16 (38 aa).

Glutamine amide occurs at positions 19 and 38.

The protein belongs to the cationic peptide 04 (cupiennin) family. 10 (double chain) subfamily. Expressed by the venom gland.

Its subcellular location is the secreted. The polypeptide is Toxin CSTX-16 (Cupiennius salei (American wandering spider)).